The chain runs to 165 residues: Protein SprT (165 aa).

Residues 10 to 157 form the SprT-like domain; sequence EACYRQAEDF…YCRRCKATLV (148 aa). Zn(2+) is bound at residue histidine 69. Glutamate 70 is a catalytic residue. Histidine 73 lines the Zn(2+) pocket.

Belongs to the SprT family. Requires Zn(2+) as cofactor.

The protein localises to the cytoplasm. This chain is Protein SprT, found in Pseudomonas paraeruginosa (strain DSM 24068 / PA7) (Pseudomonas aeruginosa (strain PA7)).